We begin with the raw amino-acid sequence, 887 residues long: Alanine--tRNA ligase (887 aa).

The Zn(2+) site is built by His-565, His-569, Cys-674, and His-678.

This sequence belongs to the class-II aminoacyl-tRNA synthetase family. Zn(2+) is required as a cofactor.

It is found in the cytoplasm. It carries out the reaction tRNA(Ala) + L-alanine + ATP = L-alanyl-tRNA(Ala) + AMP + diphosphate. Functionally, catalyzes the attachment of alanine to tRNA(Ala) in a two-step reaction: alanine is first activated by ATP to form Ala-AMP and then transferred to the acceptor end of tRNA(Ala). Also edits incorrectly charged Ser-tRNA(Ala) and Gly-tRNA(Ala) via its editing domain. The polypeptide is Alanine--tRNA ligase (Erythrobacter litoralis (strain HTCC2594)).